Here is a 183-residue protein sequence, read N- to C-terminus: Tumor necrosis factor ligand superfamily member 4 (183 aa).

Residues 1-23 (MERVQPLEENVGNAARPRFERNK) lie on the Cytoplasmic side of the membrane. The chain crosses the membrane as a helical; Signal-anchor for type II membrane protein span at residues 24–50 (LLLVASVIQGLGLLLCFTYICLHFSAL). The THD domain maps to 51 to 173 (QVSHRYPRIQ…HVNGGELILI (123 aa)). Residues 51-183 (QVSHRYPRIQ…HQNPGEFCVL (133 aa)) are Extracellular-facing. Asn-90, Asn-114, Asn-152, and Asn-157 each carry an N-linked (GlcNAc...) asparagine glycan. A disulfide bridge connects residues Cys-97 and Cys-181.

The protein belongs to the tumor necrosis factor family. In terms of assembly, homotrimer.

The protein resides in the membrane. Cytokine that binds to TNFRSF4. Co-stimulates T-cell proliferation and cytokine production. This is Tumor necrosis factor ligand superfamily member 4 (TNFSF4) from Homo sapiens (Human).